We begin with the raw amino-acid sequence, 200 residues long: Probable nicotinate-nucleotide adenylyltransferase (200 aa).

The protein belongs to the NadD family.

The catalysed reaction is nicotinate beta-D-ribonucleotide + ATP + H(+) = deamido-NAD(+) + diphosphate. It participates in cofactor biosynthesis; NAD(+) biosynthesis; deamido-NAD(+) from nicotinate D-ribonucleotide: step 1/1. In terms of biological role, catalyzes the reversible adenylation of nicotinate mononucleotide (NaMN) to nicotinic acid adenine dinucleotide (NaAD). This is Probable nicotinate-nucleotide adenylyltransferase from Clostridium botulinum (strain Alaska E43 / Type E3).